Here is a 356-residue protein sequence, read N- to C-terminus: Glutamine synthetase cytosolic isozyme 1-1 (356 aa).

Ser2 carries the N-acetylserine modification. Phosphoserine occurs at positions 2 and 48. A GS beta-grasp domain is found at 19–99 (IIAEYIWVGG…VMCDAYTPAG (81 aa)). A disordered region spans residues 36–62 (KARTLPGPVTDPSQLPKWNYDGSSTGQ). The region spanning 106–356 (KRHAAAKVFS…IAETTILWNP (251 aa)) is the GS catalytic domain.

This sequence belongs to the glutamine synthetase family. Homooctamer. Interacts with CRK3 and GRF3. Phosphorylated by CRK3. Expressed in root tips, root hairs and epidermis. Ubiquitously expressed with higher levels in siliques and roots.

It is found in the cytoplasm. The enzyme catalyses L-glutamate + NH4(+) + ATP = L-glutamine + ADP + phosphate + H(+). Its function is as follows. High-affinity glutamine synthetase which catalyzes the synthesis of glutamine from ammonium and glutamate. May contribute to the homeostatic control of glutamine synthesis in roots. The protein is Glutamine synthetase cytosolic isozyme 1-1 (GLN1-1) of Arabidopsis thaliana (Mouse-ear cress).